A 785-amino-acid chain; its full sequence is Endonuclease MutS2 (785 aa).

333 to 340 contacts ATP; the sequence is GPNTGGKT. The 76-residue stretch at 710-785 folds into the Smr domain; the sequence is LDLRGQRYDE…GNGATIVQLK (76 aa).

The protein belongs to the DNA mismatch repair MutS family. MutS2 subfamily. In terms of assembly, homodimer. Binds to stalled ribosomes, contacting rRNA.

Functionally, endonuclease that is involved in the suppression of homologous recombination and thus may have a key role in the control of bacterial genetic diversity. Its function is as follows. Acts as a ribosome collision sensor, splitting the ribosome into its 2 subunits. Detects stalled/collided 70S ribosomes which it binds and splits by an ATP-hydrolysis driven conformational change. Acts upstream of the ribosome quality control system (RQC), a ribosome-associated complex that mediates the extraction of incompletely synthesized nascent chains from stalled ribosomes and their subsequent degradation. Probably generates substrates for RQC. This chain is Endonuclease MutS2, found in Lactobacillus acidophilus (strain ATCC 700396 / NCK56 / N2 / NCFM).